The sequence spans 415 residues: Esterase FrsA (415 aa).

The protein belongs to the FrsA family.

The catalysed reaction is a carboxylic ester + H2O = an alcohol + a carboxylate + H(+). In terms of biological role, catalyzes the hydrolysis of esters. This is Esterase FrsA from Serratia proteamaculans (strain 568).